A 230-amino-acid chain; its full sequence is uncharacterized protein (230 aa).

This is an uncharacterized protein from Acanthamoeba polyphaga (Amoeba).